Consider the following 445-residue polypeptide: Trigger factor (445 aa).

The 86-residue stretch at 162–247 (GDQVTIDAIG…IKAVHTAEPT (86 aa)) folds into the PPIase FKBP-type domain.

The protein belongs to the FKBP-type PPIase family. Tig subfamily.

It localises to the cytoplasm. It carries out the reaction [protein]-peptidylproline (omega=180) = [protein]-peptidylproline (omega=0). In terms of biological role, involved in protein export. Acts as a chaperone by maintaining the newly synthesized protein in an open conformation. Functions as a peptidyl-prolyl cis-trans isomerase. This Rickettsia conorii (strain ATCC VR-613 / Malish 7) protein is Trigger factor.